The sequence spans 436 residues: 3-ketoacyl-CoA thiolase (436 aa).

Catalysis depends on Cys-99, which acts as the Acyl-thioester intermediate. Active-site proton acceptor residues include His-392 and Cys-422.

It belongs to the thiolase-like superfamily. Thiolase family. Heterotetramer of two alpha chains (FadJ) and two beta chains (FadI).

It localises to the cytoplasm. It carries out the reaction an acyl-CoA + acetyl-CoA = a 3-oxoacyl-CoA + CoA. The protein operates within lipid metabolism; fatty acid beta-oxidation. Functionally, catalyzes the final step of fatty acid oxidation in which acetyl-CoA is released and the CoA ester of a fatty acid two carbons shorter is formed. In Escherichia coli O9:H4 (strain HS), this protein is 3-ketoacyl-CoA thiolase.